Consider the following 96-residue polypeptide: Protein RnfH (96 aa).

Belongs to the UPF0125 (RnfH) family.

The polypeptide is Protein RnfH (Citrobacter koseri (strain ATCC BAA-895 / CDC 4225-83 / SGSC4696)).